Here is a 407-residue protein sequence, read N- to C-terminus: Aspartate aminotransferase, cytoplasmic (407 aa).

Residues G39, W136, and N189 each contribute to the L-aspartate site. N6-(pyridoxal phosphate)lysine is present on K253. R381 is an L-aspartate binding site.

The protein belongs to the class-I pyridoxal-phosphate-dependent aminotransferase family. In terms of assembly, homodimer. The cofactor is pyridoxal 5'-phosphate.

It localises to the cytoplasm. The catalysed reaction is L-aspartate + 2-oxoglutarate = oxaloacetate + L-glutamate. Its function is as follows. Important for the metabolism of amino acids and Krebs-cycle related organic acids. In plants, it is involved in nitrogen metabolism and in aspects of carbon and energy metabolism. The sequence is that of Aspartate aminotransferase, cytoplasmic from Oryza sativa subsp. japonica (Rice).